We begin with the raw amino-acid sequence, 230 residues long: MITRYKPESGFVARSGGPDRKRPHDWIVWHFTHADNLPGIITAGRLLADSAVTPTTEVAYNPVKELRRHKVVAPDSRYPASMASDHVPFYIAARSPMLYVVCKGHSGYSGGAGPLVHLGVALGDIIDADLTWCASDGNAAASYTKFSRQVDTLGTFVDFDLLCQRQWHNTDDDPNRQSRRAAEILVYGHVPFELVSYVCCYNTETMTRVRTLLDPVGGVRKYVIKPGMYY.

Residues 26–230 (WIVWHFTHAD…KYVIKPGMYY (205 aa)) form the DarT domain. NAD(+) contacts are provided by residues 30–32 (HFT), Gly-39, Leu-47, and Arg-67. Arg-67 acts as the Proton acceptor in catalysis. Glu-183 is an active-site residue.

This sequence belongs to the DarT ADP-ribosyltransferase family. As to quaternary structure, interacts with cognate antitoxin DarG (via C-terminus); this heterodimeric complex neutralizes the toxic effect of DarT by preventing ssDNA binding to DarT and consequently inactivating the toxin by direct protein-protein interactions.

It catalyses the reaction a thymidine in DNA + NAD(+) = an N-(ADP-alpha-D-ribosyl)-thymidine in DNA + nicotinamide + H(+). In terms of biological role, toxic component of the hybrid type II/IV toxin-antitoxin (TA) system DarTG, which plays a crucial role in controlling bacterial growth and bacteriophage infection. ADP-ribosylates ssDNA, preferentially in the motif TTTW. In case of phage infection, DarT toxin ADP-ribosylates DNA, which inhibits both viral DNA and RNA synthesis and leads to abortive infection. Its toxic effect is neutralized by cognate antitoxin DarG. The protein is DNA ADP-ribosyl transferase of Mycobacterium bovis (strain BCG / Pasteur 1173P2).